Here is a 103-residue protein sequence, read N- to C-terminus: MMPEICPRCGLPKELCVCEEIAKEEQKIKIYVTKRRFGKLMTIIEGFDTSVIDLKELAKKLKDICACGGTVKDNTIELQGDHRKKVAEELVKMGFSRDSIEIR.

The protein belongs to the SUI1 family.

The protein is Protein translation factor SUI1 homolog of Methanocaldococcus jannaschii (strain ATCC 43067 / DSM 2661 / JAL-1 / JCM 10045 / NBRC 100440) (Methanococcus jannaschii).